The primary structure comprises 254 residues: Winged helix repair factor 1 (254 aa).

Residues 4–21 carry the Bipartite nuclear localization signal motif; the sequence is KRHHLIPETFGVKRRRKR. Winged helix domain stretches follow at residues 32 to 104, 120 to 179, and 180 to 254; these read EPGS…GIIF, PYAG…LAVP, and GAGR…LPET.

It belongs to the STK19 family. In terms of assembly, monomer in solution. Homodimer; when bound to DNA. Component of a transcription-coupled nucleotide excision repair (TC-NER) complex composed of STK19, ERCC6, ERCC8, DDA1, DDB1, ELOF1 and UVSSA which assembles and interacts with the multiprotein RNA polymerase II complex when it stalls at DNA lesions. As to expression, monocytes, hepatocytes, epithelial cells, T- and B-lymphocytes.

The protein localises to the nucleus. The protein resides in the cytoplasm. Functionally, DNA-binding protein which is required for efficient transcription-coupled nucleotide excision repair (TC-NER). Acts as part of a TC-NER complex which assembles and interacts with RNA polymerase II (RNAPII) when it stalls at DNA lesions. TC-NER complex subunit UVSSA binds to the GTF2H1/p62 subunit of the TFIIH transcription factor complex, tethering TFIIH to the TC-NER complex. WHR1/STK19 then interacts with the XPD helicase subunit of TFIIH which guides TFIIH to DNA downstream of the stalled RNAPII, ensuring DNA repair. Directly interacts with RNAPII and also binds to downstream DNA. Promotes the timely removal of DNA damage-stalled RNAPII, allowing downstream NER factors to access DNA lesions. Required for monoubiquitination of UVSSA. Regulates repositioning and stabilization of UVSSA within the TC-NER complex. Stimulates ubiquitination of RNAPII complex member RBP1. Also binds to RNA and regulates the expression levels of many mRNAs. The polypeptide is Winged helix repair factor 1 (Homo sapiens (Human)).